The primary structure comprises 184 residues: ADP-ribosylation factor-like protein 3 (184 aa).

Gly-2 carries the N-myristoyl glycine lipid modification. Residues 24 to 31 (GLDNAGKT), 68 to 72 (DIGGQ), and 127 to 130 (NKQD) each bind GTP.

Belongs to the small GTPase superfamily. Arf family.

The protein localises to the golgi apparatus. Its function is as follows. GTP-binding protein that may be involved in protein trafficking; may modulate vesicle budding and uncoating within the Golgi apparatus. The sequence is that of ADP-ribosylation factor-like protein 3 (arl-3) from Caenorhabditis elegans.